The primary structure comprises 279 residues: DegV domain-containing protein SACOL1460 (279 aa).

The DegV domain occupies Q4–K278. Residues T61 and S93 each contribute to the hexadecanoate site.

May bind long-chain fatty acids, such as palmitate, and may play a role in lipid transport or fatty acid metabolism. The chain is DegV domain-containing protein SACOL1460 from Staphylococcus aureus (strain COL).